The following is an 85-amino-acid chain: UPF0181 protein YE1782 (85 aa).

Disordered stretches follow at residues 1–22 and 57–85; these read MLAG…RIHQ and DTDF…PYEG. Over residues 9-21 the composition is skewed to basic and acidic residues; sequence SHEEQQEAVERIH. The span at 74–85 shows a compositional bias: acidic residues; sequence QDADEIEDPYEG.

The protein belongs to the UPF0181 family.

In Yersinia enterocolitica serotype O:8 / biotype 1B (strain NCTC 13174 / 8081), this protein is UPF0181 protein YE1782.